The chain runs to 193 residues: MTIMIKKSDFLAIPSEEYKGILSLRYQVFKQRLEWDLVVENNLESDEYDNSNAEYIYACDDTENVSGCWRLLPTTGDYMLKSVFPELLGQQSAPKDPNIVELSRFAVGKNSSKINNSASEITMKLFEAIYKHAVSQGITEYVTVTSTAIERFLKRIKVPCHRIGDKEIHVLGDTKSVVLSMPINEQFKKAVLN.

This sequence belongs to the autoinducer synthase family.

It catalyses the reaction a fatty acyl-[ACP] + S-adenosyl-L-methionine = an N-acyl-L-homoserine lactone + S-methyl-5'-thioadenosine + holo-[ACP] + H(+). Functionally, required for the synthesis of OHHL (N-(3-oxohexanoyl)-L-homoserine lactone) also known as VAI or N-(beta-ketocaproyl)homoserine lactone or 3-oxo-N-(tetrahydro-2-oxo-3-furanyl)-hexanamide, an autoinducer molecule which binds to LuxR and thus acts in bioluminescence regulation. The protein is Acyl-homoserine-lactone synthase (luxI) of Aliivibrio fischeri (Vibrio fischeri).